We begin with the raw amino-acid sequence, 312 residues long: MKVAVLGAAGGIGQALALLLKTQLPSGSELSLYDIAPVTPGVAVDLSHIPTAVKIKGFSGEDATPALHGADVVLISAGVARKPGMDRSDLFNVNAGIVRNLIQQVATTCPKACIGIITNPVNTTVAIAAEVLKKAGVYDKNKLFGVTSLDIIRSNTFVAELKGKQPEELNVPVIGGHSGVTILPLLSQIPGVSFTDQEVADLTKRIQNAGTEVVEAKAGGGSATLSMGQAAARFGLSLVRALQGEKGVVECAYVEGDGKYARFFAQPLVLGKNGVEERKDIGTLSAFEQKALDDMLDVLHKDIELGEKFINN.

NAD(+) contacts are provided by residues 7-13 (GAAGGIG) and Asp-34. Residues Arg-81 and Arg-87 each coordinate substrate. NAD(+) contacts are provided by residues Asn-94 and 117–119 (ITN). Substrate is bound by residues Asn-119 and Arg-153. His-177 (proton acceptor) is an active-site residue. An NAD(+)-binding site is contributed by Met-227.

Belongs to the LDH/MDH superfamily. MDH type 1 family. As to quaternary structure, homodimer.

It catalyses the reaction (S)-malate + NAD(+) = oxaloacetate + NADH + H(+). Its function is as follows. Catalyzes the reversible oxidation of malate to oxaloacetate. In Serratia proteamaculans (strain 568), this protein is Malate dehydrogenase.